Reading from the N-terminus, the 980-residue chain is Putative formate dehydrogenase YrhE (980 aa).

The region spanning K5–R81 is the 2Fe-2S ferredoxin-type domain. [2Fe-2S] cluster-binding residues include C39, C50, C53, and C65. The 4Fe-4S His(Cys)3-ligated-type domain occupies R81–G121. [4Fe-4S] cluster-binding residues include H97, C101, C104, C111, C153, C156, C159, C163, C196, C199, C202, C206, C270, C273, C277, and C305. 4Fe-4S ferredoxin-type domains lie at P144 to T171 and E187 to M216. Positions M258–D980 are formate dehydrogenase. Positions T263–E319 constitute a 4Fe-4S Mo/W bis-MGD-type domain. The tract at residues E944–D980 is disordered.

In the C-terminal section; belongs to the prokaryotic molybdopterin-containing oxidoreductase family. [2Fe-2S] cluster serves as cofactor. Requires [4Fe-4S] cluster as cofactor. It depends on Mo-bis(molybdopterin guanine dinucleotide) as a cofactor.

It carries out the reaction formate + NAD(+) = CO2 + NADH. In Bacillus subtilis (strain 168), this protein is Putative formate dehydrogenase YrhE (yrhE).